We begin with the raw amino-acid sequence, 457 residues long: Ig mu chain C region (457 aa).

A CH1 region spans residues Ser-1 to Gln-105. Cys-27 and Cys-89 are joined by a disulfide. N-linked (GlcNAc...) asparagine glycosylation is found at Asn-45 and Asn-113. A CH2 region spans residues Val-106–Asp-220. An intrachain disulfide couples Cys-136 to Cys-200. 3 N-linked (GlcNAc...) asparagine glycosylation sites follow: Asn-212, Asn-276, and Asn-283. Positions Asp-221–Lys-326 are CH3. Cystine bridges form between Cys-248/Cys-307 and Cys-355/Cys-417. The tract at residues Asp-327–Tyr-457 is CH4. Asn-444 carries an N-linked (GlcNAc...) asparagine glycan.

In Suncus murinus (Asian house shrew), this protein is Ig mu chain C region.